Consider the following 88-residue polypeptide: Small ribosomal subunit protein uS15 (88 aa).

The protein belongs to the universal ribosomal protein uS15 family. In terms of assembly, part of the 30S ribosomal subunit. Forms a bridge to the 50S subunit in the 70S ribosome, contacting the 23S rRNA.

Functionally, one of the primary rRNA binding proteins, it binds directly to 16S rRNA where it helps nucleate assembly of the platform of the 30S subunit by binding and bridging several RNA helices of the 16S rRNA. Forms an intersubunit bridge (bridge B4) with the 23S rRNA of the 50S subunit in the ribosome. The protein is Small ribosomal subunit protein uS15 of Psychrobacter arcticus (strain DSM 17307 / VKM B-2377 / 273-4).